We begin with the raw amino-acid sequence, 150 residues long: UPF0178 protein Shewmr4_1560 (150 aa).

It belongs to the UPF0178 family.

The sequence is that of UPF0178 protein Shewmr4_1560 from Shewanella sp. (strain MR-4).